The primary structure comprises 301 residues: Phosducin-like protein (301 aa).

N-acetylthreonine is present on Thr2. A disordered region spans residues 18 to 57 (SSSEDEDSDHEDKDRGRCAPASSSVPAEAELAGEGISVNT). 2 positions are modified to phosphoserine: Ser20 and Ser25. The segment covering 36-49 (APASSSVPAEAELA) has biased composition (low complexity). The Phosducin domain maps to 36–299 (APASSSVPAE…TCHSEDSDLE (264 aa)). Residues Ser226, Ser293, and Ser296 each carry the phosphoserine modification.

The protein belongs to the phosducin family. As to quaternary structure, forms a complex with the beta and gamma subunits of the GTP-binding protein, transducin. Interacts with the CCT chaperonin complex.

It localises to the cell projection. The protein resides in the cilium. In terms of biological role, acts as a positive regulator of hedgehog signaling and regulates ciliary function. Its function is as follows. Functions as a co-chaperone for CCT in the assembly of heterotrimeric G protein complexes, facilitates the assembly of both Gbeta-Ggamma and RGS-Gbeta5 heterodimers. Functionally, acts as a negative regulator of heterotrimeric G proteins assembly by trapping the preloaded G beta subunits inside the CCT chaperonin. This is Phosducin-like protein (PDCL) from Homo sapiens (Human).